The following is a 235-amino-acid chain: uncharacterized protein (235 aa).

Residues M1 to A24 form the signal peptide.

This is an uncharacterized protein from Haemophilus influenzae (strain ATCC 51907 / DSM 11121 / KW20 / Rd).